The primary structure comprises 425 residues: Palmitoyltransferase ZDHHC23 (425 aa).

Residues Met-1 to Lys-81 are Cytoplasmic-facing. Residues Val-82–Val-99 traverse the membrane as a helical segment. Residues Ala-100 to Trp-102 lie on the Lumenal side of the membrane. A helical transmembrane segment spans residues His-103 to Thr-125. Over His-126–Glu-130 the chain is Cytoplasmic. The helical transmembrane segment at Gln-131–Leu-151 threads the bilayer. Topologically, residues Arg-152–Arg-159 are lumenal. The helical transmembrane segment at Val-160–Tyr-180 threads the bilayer. At Arg-181 to Gln-292 the chain is on the cytoplasmic side. Residues Asp-249–Ser-299 form the DHHC domain. The active-site S-palmitoyl cysteine intermediate is the Cys-279. A helical membrane pass occupies residues Ala-293–Leu-313. Residues Asn-314–Thr-343 are Lumenal-facing. Residues Cys-344–Ile-364 traverse the membrane as a helical segment. At Asn-365–Val-425 the chain is on the cytoplasmic side. An interaction with NOS1 region spans residues Glu-422–Val-425.

It belongs to the DHHC palmitoyltransferase family. As to quaternary structure, interacts with NOS1. In terms of tissue distribution, expressed in the brain.

The protein resides in the golgi apparatus membrane. It is found in the golgi apparatus. It localises to the trans-Golgi network membrane. It carries out the reaction L-cysteinyl-[protein] + hexadecanoyl-CoA = S-hexadecanoyl-L-cysteinyl-[protein] + CoA. Its function is as follows. Palmitoyltransferase that could catalyze the addition of palmitate onto various protein substrates and be involved in a variety of cellular processes. Palmitoyltransferase that mediates palmitoylation of KCNMA1, regulating localization of KCNMA1 to the plasma membrane. May be involved in NOS1 regulation and targeting to the synaptic membrane. The chain is Palmitoyltransferase ZDHHC23 from Mus musculus (Mouse).